The following is a 1459-amino-acid chain: Mediator of RNA polymerase II transcription subunit 14 (1459 aa).

Positions 1-37 (MAPVQLDNHQLIPPGGGGGSSGGGGSSSGSASAPAPP) are disordered. Gly residues predominate over residues 14–27 (PGGGGGSSGGGGSS). The LXXLL motif 1 signature appears at 75–79 (LTDLL). An interaction with STAT2 region spans residues 194-572 (KQATLHQLNQ…VPNKPTQLSY (379 aa)). Positions 506-830 (LGQQRCKQSI…TKGSSISIQW (325 aa)) are interaction with SREBF1. Phosphoserine occurs at positions 623 and 992. A disordered region spans residues 979–1171 (ARRRSVNEDD…NMPPPRKLPQ (193 aa)). 2 stretches are compositionally biased toward polar residues: residues 1029–1059 (PPTS…SSPS) and 1097–1106 (DPSSPYTMVS). Residues Ser1117, Ser1124, Ser1133, Ser1141, and Ser1149 each carry the phosphoserine modification. Residues 1152–1161 (AGTSSQTMPT) show a composition bias toward polar residues. Positions 1187-1191 (LNILL) match the LXXLL motif 2 motif.

Belongs to the Mediator complex subunit 14 family. Component of the Mediator complex, which is composed of MED1, MED4, MED6, MED7, MED8, MED9, MED10, MED11, MED12, MED13, MED13L, MED14, MED15, MED16, MED17, MED18, MED19, MED20, MED21, MED22, MED23, MED24, MED25, MED26, MED27, MED29, MED30, MED31, CCNC, CDK8 and CDC2L6/CDK11. The MED12, MED13, CCNC and CDK8 subunits form a distinct module termed the CDK8 module. Mediator containing the CDK8 module is less active than Mediator lacking this module in supporting transcriptional activation. Individual preparations of the Mediator complex lacking one or more distinct subunits have been variously termed ARC, CRSP, DRIP, PC2, SMCC and TRAP. Interacts with AR, ESR1, SREBF1 and STAT2. Interacts with GATA1.

It is found in the nucleus. Functionally, component of the Mediator complex, a coactivator involved in the regulated transcription of nearly all RNA polymerase II-dependent genes. Mediator functions as a bridge to convey information from gene-specific regulatory proteins to the basal RNA polymerase II transcription machinery. Mediator is recruited to promoters by direct interactions with regulatory proteins and serves as a scaffold for the assembly of a functional preinitiation complex with RNA polymerase II and the general transcription factors. The polypeptide is Mediator of RNA polymerase II transcription subunit 14 (Med14) (Mus musculus (Mouse)).